Here is a 390-residue protein sequence, read N- to C-terminus: Two-component response regulator ORR29 (390 aa).

One can recognise a Response regulatory domain in the interval 13–130; it reads SAMVIDEDKC…TIKNLWQYVD (118 aa). Aspartate 65 carries the 4-aspartylphosphate modification. A DNA-binding region (myb-like GARP) is located at residues 169-226; that stretch reads KKYYLMWTPHLQKKFLHALQILGKDASPKNIKKIMGVDNIDCRQIAAHLQKHRLRLTK. Disordered regions lie at residues 233–271 and 303–339; these read FTTD…QPTE and SKHS…SGDH. The segment covering 257-271 has biased composition (polar residues); that stretch reads NASTLQPRSNTQPTE.

This sequence belongs to the ARR family. Type-B subfamily. In terms of processing, two-component system major event consists of a His-to-Asp phosphorelay between a sensor histidine kinase (HK) and a response regulator (RR). In plants, the His-to-Asp phosphorelay involves an additional intermediate named Histidine-containing phosphotransfer protein (HPt). This multistep phosphorelay consists of a His-Asp-His-Asp sequential transfer of a phosphate group between first a His and an Asp of the HK protein, followed by the transfer to a conserved His of the HPt protein and finally the transfer to an Asp in the receiver domain of the RR protein.

The protein resides in the cytoplasm. The protein localises to the cytosol. It is found in the nucleus. In terms of biological role, transcriptional activator that binds specific DNA sequence. Functions as a response regulator involved in His-to-Asp phosphorelay signal transduction system. Phosphorylation of the Asp residue in the receiver domain activates the ability of the protein to promote the transcription of target genes. May directly activate some type-A response regulators in response to cytokinins. Functions as a response regulator in response to cytokinins. This is Two-component response regulator ORR29 from Oryza sativa subsp. japonica (Rice).